The primary structure comprises 83 residues: Defensin-like protein 194 (83 aa).

The N-terminal stretch at 1-27 is a signal peptide; it reads MAMKSVSNFAIFLILFLVTSEISEIEA. 4 disulfides stabilise this stretch: Cys32/Cys78, Cys44/Cys68, Cys53/Cys73, and Cys57/Cys75.

Belongs to the DEFL family. Protease inhibitor I18 (RTI/MTI-2) subfamily.

The protein resides in the secreted. This is Defensin-like protein 194 (ATTI3) from Arabidopsis thaliana (Mouse-ear cress).